The chain runs to 299 residues: MSNKIKAAIIGPGNIGMDLMFKLMRSKYIDVDTVVGIIPESEGLALARKHGKKTSAEGIKAILGNKDIKIVFDATSAKAHLKHAPLLEQDGKIAIDLTPAAVGPYCVPAVTMEEQLNCKNVNMVTCAGQATTPIVYAINKIADVKYAEIVATISSRSAGPGTRQNIDEFTETTAKALEKIGGADKGKAIIILNPAEPPIMMRNTIYTRVANPDAPGIIEAIEEMVGKIKKYVPGYRLKVPPIIDGDKITTIIEVEGEGAYLPKYAGNLDIITAAAVAFADEVAKKLLAEEQAKEVRAHG.

The Acyl-thioester intermediate role is filled by Cys126. Residues 157–165 and Asn267 contribute to the NAD(+) site; that span reads SAGPGTRQN.

The protein belongs to the acetaldehyde dehydrogenase family.

The enzyme catalyses acetaldehyde + NAD(+) + CoA = acetyl-CoA + NADH + H(+). This chain is Acetaldehyde dehydrogenase (mhpF), found in Carboxydothermus hydrogenoformans (strain ATCC BAA-161 / DSM 6008 / Z-2901).